Here is a 101-residue protein sequence, read N- to C-terminus: Protein Tat (101 aa).

Residues 1 to 24 form an interaction with human CREBBP region; that stretch reads MEPVDPNLEPWKHPGSQPRTACTN. Residues 1–48 are transactivation; it reads MEPVDPNLEPWKHPGSQPRTACTNCYCKKCCFHCQVCFITKGLGISYG. Residues C22, C25, and C27 each coordinate Zn(2+). Residues 22 to 37 are cysteine-rich; it reads CTNCYCKKCCFHCQVC. An N6-acetyllysine; by host PCAF modification is found at K28. 4 residues coordinate Zn(2+): C30, H33, C34, and C37. Positions 38-48 are core; the sequence is FITKGLGISYG. The segment at 48-101 is disordered; the sequence is GRKKRRQRQRAPDSSQNHQDSLSKQPSSQPRGDPTGPKESKKEVERETETDPLD. The Nuclear localization signal, RNA-binding (TAR), and protein transduction signature appears at 49–57; that stretch reads RKKRRQRQR. The interaction with the host capping enzyme RNGTT stretch occupies residues 49 to 86; it reads RKKRRQRQRAPDSSQNHQDSLSKQPSSQPRGDPTGPKE. N6-acetyllysine; by host EP300 and GCN5L2 is present on residues K50 and K51. 2 positions are modified to asymmetric dimethylarginine; by host PRMT6: R52 and R53. The span at 59–77 shows a compositional bias: polar residues; sequence PDSSQNHQDSLSKQPSSQP. A Glycyl lysine isopeptide (Lys-Gly) (interchain with G-Cter in ubiquitin) cross-link involves residue K71. Positions 78–80 match the Cell attachment site motif; the sequence is RGD. A compositionally biased stretch (basic and acidic residues) spans 83 to 101; that stretch reads GPKESKKEVERETETDPLD.

Belongs to the lentiviruses Tat family. As to quaternary structure, interacts with host CCNT1. Associates with the P-TEFb complex composed at least of Tat, P-TEFb (CDK9 and CCNT1), TAR RNA, RNA Pol II. Recruits the HATs CREBBP, TAF1/TFIID, EP300, PCAF and GCN5L2. Interacts with host KAT5/Tip60; this interaction targets the latter to degradation. Interacts with the host deacetylase SIRT1. Interacts with host capping enzyme RNGTT; this interaction stimulates RNGTT. Binds to host KDR, and to the host integrins ITGAV/ITGB3 and ITGA5/ITGB1. Interacts with host KPNB1/importin beta-1 without previous binding to KPNA1/importin alpha-1. Interacts with EIF2AK2. Interacts with host nucleosome assembly protein NAP1L1; this interaction may be required for the transport of Tat within the nucleus, since the two proteins interact at the nuclear rim. Interacts with host C1QBP/SF2P32; this interaction involves lysine-acetylated Tat. Interacts with the host chemokine receptors CCR2, CCR3 and CXCR4. Interacts with host DPP4/CD26; this interaction may trigger an anti-proliferative effect. Interacts with host LDLR. Interacts with the host extracellular matrix metalloproteinase MMP1. Interacts with host PRMT6; this interaction mediates Tat's methylation. Interacts with, and is ubiquitinated by MDM2/Hdm2. Interacts with host PSMC3 and HTATIP2. Interacts with STAB1; this interaction may overcome SATB1-mediated repression of IL2 and IL2RA (interleukin) in T cells by binding to the same domain than HDAC1. Interacts (when acetylated) with human CDK13, thereby increasing HIV-1 mRNA splicing and promoting the production of the doubly spliced HIV-1 protein Nef. Interacts with host TBP; this interaction modulates the activity of transcriptional pre-initiation complex. Interacts with host RELA. Interacts with host PLSCR1; this interaction negatively regulates Tat transactivation activity by altering its subcellular distribution. In terms of processing, asymmetrical arginine methylation by host PRMT6 seems to diminish the transactivation capacity of Tat and affects the interaction with host CCNT1. Post-translationally, acetylation by EP300, CREBBP, GCN5L2/GCN5 and PCAF regulates the transactivation activity of Tat. EP300-mediated acetylation of Lys-50 promotes dissociation of Tat from the TAR RNA through the competitive binding to PCAF's bromodomain. In addition, the non-acetylated Tat's N-terminus can also interact with PCAF. PCAF-mediated acetylation of Lys-28 enhances Tat's binding to CCNT1. Lys-50 is deacetylated by SIRT1. Polyubiquitination by host MDM2 does not target Tat to degradation, but activates its transactivation function and fosters interaction with CCNT1 and TAR RNA. In terms of processing, phosphorylated by EIF2AK2 on serine and threonine residues adjacent to the basic region important for TAR RNA binding and function. Phosphorylation of Tat by EIF2AK2 is dependent on the prior activation of EIF2AK2 by dsRNA.

The protein localises to the host nucleus. It localises to the host nucleolus. It is found in the host cytoplasm. Its subcellular location is the secreted. Transcriptional activator that increases RNA Pol II processivity, thereby increasing the level of full-length viral transcripts. Recognizes a hairpin structure at the 5'-LTR of the nascent viral mRNAs referred to as the transactivation responsive RNA element (TAR) and recruits the cyclin T1-CDK9 complex (P-TEFb complex) that will in turn hyperphosphorylate the RNA polymerase II to allow efficient elongation. The CDK9 component of P-TEFb and other Tat-activated kinases hyperphosphorylate the C-terminus of RNA Pol II that becomes stabilized and much more processive. Other factors such as HTATSF1/Tat-SF1, SUPT5H/SPT5, and HTATIP2 are also important for Tat's function. Besides its effect on RNA Pol II processivity, Tat induces chromatin remodeling of proviral genes by recruiting the histone acetyltransferases (HATs) CREBBP, EP300 and PCAF to the chromatin. This also contributes to the increase in proviral transcription rate, especially when the provirus integrates in transcriptionally silent region of the host genome. To ensure maximal activation of the LTR, Tat mediates nuclear translocation of NF-kappa-B by interacting with host RELA. Through its interaction with host TBP, Tat may also modulate transcription initiation. Tat can reactivate a latently infected cell by penetrating in it and transactivating its LTR promoter. In the cytoplasm, Tat is thought to act as a translational activator of HIV-1 mRNAs. In terms of biological role, extracellular circulating Tat can be endocytosed by surrounding uninfected cells via the binding to several surface receptors such as CD26, CXCR4, heparan sulfate proteoglycans (HSPG) or LDLR. Neurons are rarely infected, but they internalize Tat via their LDLR. Through its interaction with nuclear HATs, Tat is potentially able to control the acetylation-dependent cellular gene expression. Modulates the expression of many cellular genes involved in cell survival, proliferation or in coding for cytokines or cytokine receptors. Tat plays a role in T-cell and neurons apoptosis. Tat induced neurotoxicity and apoptosis probably contribute to neuroAIDS. Circulating Tat also acts as a chemokine-like and/or growth factor-like molecule that binds to specific receptors on the surface of the cells, affecting many cellular pathways. In the vascular system, Tat binds to ITGAV/ITGB3 and ITGA5/ITGB1 integrins dimers at the surface of endothelial cells and competes with bFGF for heparin-binding sites, leading to an excess of soluble bFGF. The protein is Protein Tat of Human immunodeficiency virus type 1 group M subtype B (isolate SF33) (HIV-1).